The primary structure comprises 369 residues: Putative esterase slr0264 (369 aa).

Residues serine 162, aspartate 303, and histidine 334 each act as charge relay system in the active site.

The protein belongs to the AB hydrolase superfamily. AB hydrolase 4 family.

This chain is Putative esterase slr0264, found in Synechocystis sp. (strain ATCC 27184 / PCC 6803 / Kazusa).